A 142-amino-acid chain; its full sequence is Putative phosphatidylglycerol/phosphatidylinositol transfer protein 2 (142 aa).

The first 20 residues, 1–20 (MKFYLYLSILLILLTSTSFG), serve as a signal peptide directing secretion.

This sequence belongs to the NPC2 family. Monomer.

Its function is as follows. Catalyzes the intermembrane transfer of phosphatidylglycerol and phosphatidylinositol. This chain is Putative phosphatidylglycerol/phosphatidylinositol transfer protein 2, found in Dictyostelium discoideum (Social amoeba).